A 192-amino-acid polypeptide reads, in one-letter code: MLPLLLASSSAYRRELLARLHLPFTWASPDIDEQRLDGEPPVELVRRLARQKAEALAGSHPRHLIIGSDQVAVLGEQVLGKPHTFERACEQLLECSGQQVSFLTGLALLNSATGQCQVDCVPFTVTLRELSREQVERYVAAEQPLDCAGSFKAEGLGVSLFQSTHGCDATSLIGLPLIRLVDMLTKEGVMVP.

Asp-69 (proton acceptor) is an active-site residue.

Belongs to the Maf family. YceF subfamily. It depends on a divalent metal cation as a cofactor.

It localises to the cytoplasm. It carries out the reaction N(7)-methyl-GTP + H2O = N(7)-methyl-GMP + diphosphate + H(+). In terms of biological role, nucleoside triphosphate pyrophosphatase that hydrolyzes 7-methyl-GTP (m(7)GTP). May have a dual role in cell division arrest and in preventing the incorporation of modified nucleotides into cellular nucleic acids. In Pseudomonas putida (strain ATCC 47054 / DSM 6125 / CFBP 8728 / NCIMB 11950 / KT2440), this protein is 7-methyl-GTP pyrophosphatase (maf-2).